A 250-amino-acid chain; its full sequence is Triosephosphate isomerase (250 aa).

The substrate site is built by asparagine 10 and lysine 12. The Electrophile role is filled by histidine 94. Glutamate 167 acts as the Proton acceptor in catalysis.

It belongs to the triosephosphate isomerase family. In terms of assembly, homodimer.

It is found in the cytoplasm. The catalysed reaction is D-glyceraldehyde 3-phosphate = dihydroxyacetone phosphate. The protein operates within carbohydrate biosynthesis; gluconeogenesis. It functions in the pathway carbohydrate degradation; glycolysis; D-glyceraldehyde 3-phosphate from glycerone phosphate: step 1/1. In Taenia solium (Pork tapeworm), this protein is Triosephosphate isomerase.